Reading from the N-terminus, the 464-residue chain is Transcription factor EAT1 (464 aa).

Residues G261–R274 are basic motif; degenerate. One can recognise a bHLH domain in the interval G261 to L310. Residues E275–L310 form a helix-loop-helix motif region. A disordered region spans residues Q338–D357.

Belongs to the bHLH protein family. Interacts with TDR.

The protein resides in the nucleus. Transcription factor involved in the regulation of tapetum programmed cell death (PCD) and degradation during male reproductive development. Interacts with TDR and promote tapetal PCD by regulating the expression of RTS, and the two lipid-transfer proteins C4 and C6, which function in microspore development. Acts downstream from and interacts with TDR in the regulation of tapetal PCD. Regulates directly the aspartic protease AP25 and AP37 during tapetal PCD. May not target the cysteine protease CP1. The chain is Transcription factor EAT1 from Oryza sativa subsp. japonica (Rice).